The following is a 173-amino-acid chain: Mesencephalic astrocyte-derived neurotrophic factor homolog (173 aa).

Positions 1–22 (MNTSQIVLMFCLVVGVAQTALA) are cleaved as a signal peptide. 4 cysteine pairs are disulfide-bonded: cysteine 28–cysteine 114, cysteine 31–cysteine 103, cysteine 61–cysteine 72, and cysteine 148–cysteine 151.

Belongs to the ARMET family.

The protein resides in the secreted. In terms of biological role, required during the maturation of the embryonic nervous system for maintenance of neuronal and cuticular connectivity. Essential for maintenance of dopaminergic neurons and dopamine levels. This chain is Mesencephalic astrocyte-derived neurotrophic factor homolog, found in Drosophila grimshawi (Hawaiian fruit fly).